The primary structure comprises 75 residues: Cytochrome c oxidase subunit 6C (75 aa).

At 1–13 (MASEVLAKPQMRG) the chain is on the mitochondrial matrix side. Residues 14-54 (LLARRLRIHMVGAFLISLGVAALYKFGVAEPRKKAYADFYK) form a helical membrane-spanning segment. At 55–75 (NYSPEKDFEEMKKAGVFRSIK) the chain is on the mitochondrial intermembrane side.

The protein belongs to the cytochrome c oxidase subunit 6c family. Component of the cytochrome c oxidase (complex IV, CIV), a multisubunit enzyme composed of 14 subunits. The complex is composed of a catalytic core of 3 subunits MT-CO1, MT-CO2 and MT-CO3, encoded in the mitochondrial DNA, and 11 supernumerary subunits COX4I, COX5A, COX5B, COX6A, COX6B, COX6C, COX7A, COX7B, COX7C, COX8 and NDUFA4, which are encoded in the nuclear genome. The complex exists as a monomer or a dimer and forms supercomplexes (SCs) in the inner mitochondrial membrane with NADH-ubiquinone oxidoreductase (complex I, CI) and ubiquinol-cytochrome c oxidoreductase (cytochrome b-c1 complex, complex III, CIII), resulting in different assemblies (supercomplex SCI(1)III(2)IV(1) and megacomplex MCI(2)III(2)IV(2)).

It localises to the mitochondrion inner membrane. It participates in energy metabolism; oxidative phosphorylation. Component of the cytochrome c oxidase, the last enzyme in the mitochondrial electron transport chain which drives oxidative phosphorylation. The respiratory chain contains 3 multisubunit complexes succinate dehydrogenase (complex II, CII), ubiquinol-cytochrome c oxidoreductase (cytochrome b-c1 complex, complex III, CIII) and cytochrome c oxidase (complex IV, CIV), that cooperate to transfer electrons derived from NADH and succinate to molecular oxygen, creating an electrochemical gradient over the inner membrane that drives transmembrane transport and the ATP synthase. Cytochrome c oxidase is the component of the respiratory chain that catalyzes the reduction of oxygen to water. Electrons originating from reduced cytochrome c in the intermembrane space (IMS) are transferred via the dinuclear copper A center (CU(A)) of subunit 2 and heme A of subunit 1 to the active site in subunit 1, a binuclear center (BNC) formed by heme A3 and copper B (CU(B)). The BNC reduces molecular oxygen to 2 water molecules using 4 electrons from cytochrome c in the IMS and 4 protons from the mitochondrial matrix. This Saimiri sciureus (Common squirrel monkey) protein is Cytochrome c oxidase subunit 6C (COX6C).